The sequence spans 398 residues: Delta-aminolevulinic acid dehydratase, chloroplastic (398 aa).

The disordered stretch occupies residues 48-87 (VPEAPPVPPTPASPAGTPVVPSLPIQRRPRRNRRSPALRS). Residues 50-59 (EAPPVPPTPA) show a composition bias toward pro residues. Residues 60–69 (SPAGTPVVPS) are compositionally biased toward low complexity. Residues 74 to 83 (RRPRRNRRSP) show a composition bias toward basic residues. Lys-266 (schiff-base intermediate with substrate) is an active-site residue. Positions 276 and 288 each coordinate 5-aminolevulinate. Residue Glu-304 participates in Mg(2+) binding. Lys-319 serves as the catalytic Schiff-base intermediate with substrate. 5-aminolevulinate-binding residues include Ser-345 and Tyr-384.

This sequence belongs to the ALAD family. As to quaternary structure, homooctamer; formed by oligomerization of dimers. Probably also forms lower oligomers. Mg(2+) serves as cofactor.

The protein resides in the plastid. It localises to the chloroplast. The catalysed reaction is 2 5-aminolevulinate = porphobilinogen + 2 H2O + H(+). Its pathway is porphyrin-containing compound metabolism; protoporphyrin-IX biosynthesis; coproporphyrinogen-III from 5-aminolevulinate: step 1/4. Its activity is regulated as follows. Activated by magnesium. Inhibited by succinyl acetone. Enzyme activity may depend on the oligomerization state, where the fully active octamer may dissociate and reassemble into less active lower oligomers. In terms of biological role, catalyzes an early step in the biosynthesis of tetrapyrroles. Binds two molecules of 5-aminolevulinate per subunit, each at a distinct site, and catalyzes their condensation to form porphobilinogen. The chain is Delta-aminolevulinic acid dehydratase, chloroplastic (HEMB) from Pisum sativum (Garden pea).